A 387-amino-acid chain; its full sequence is ATP phosphoribosyltransferase regulatory subunit (387 aa).

It belongs to the class-II aminoacyl-tRNA synthetase family. HisZ subfamily. Heteromultimer composed of HisG and HisZ subunits.

It is found in the cytoplasm. It functions in the pathway amino-acid biosynthesis; L-histidine biosynthesis; L-histidine from 5-phospho-alpha-D-ribose 1-diphosphate: step 1/9. In terms of biological role, required for the first step of histidine biosynthesis. May allow the feedback regulation of ATP phosphoribosyltransferase activity by histidine. The sequence is that of ATP phosphoribosyltransferase regulatory subunit from Psychrobacter arcticus (strain DSM 17307 / VKM B-2377 / 273-4).